The following is a 150-amino-acid chain: UPF0178 protein Bpet3884 (150 aa).

This sequence belongs to the UPF0178 family.

The sequence is that of UPF0178 protein Bpet3884 from Bordetella petrii (strain ATCC BAA-461 / DSM 12804 / CCUG 43448).